We begin with the raw amino-acid sequence, 755 residues long: Putative two-component response regulator-like APRR6 (755 aa).

The Response regulatory domain occupies 14–128; it reads SILLIDHDTA…DIKNMWQHVF (115 aa).

It belongs to the ARR-like family.

It is found in the nucleus. The chain is Putative two-component response regulator-like APRR6 (APRR6) from Arabidopsis thaliana (Mouse-ear cress).